The primary structure comprises 91 residues: Large ribosomal subunit protein uL23 (91 aa).

Belongs to the universal ribosomal protein uL23 family. Part of the 50S ribosomal subunit. Contacts protein L29, and trigger factor when it is bound to the ribosome.

In terms of biological role, one of the early assembly proteins it binds 23S rRNA. One of the proteins that surrounds the polypeptide exit tunnel on the outside of the ribosome. Forms the main docking site for trigger factor binding to the ribosome. The chain is Large ribosomal subunit protein uL23 from Staphylococcus haemolyticus (strain JCSC1435).